The sequence spans 228 residues: F-box protein At5g67140 (228 aa).

The 48-residue stretch at 4-51 folds into the F-box domain; it reads EAAIDRLPLDLLAYIFSLATSFTVLAQASGVCKKWRKAVNQSMARRET.

The sequence is that of F-box protein At5g67140 from Arabidopsis thaliana (Mouse-ear cress).